A 170-amino-acid chain; its full sequence is Ribosome maturation factor RimM (170 aa).

Residues 97-170 enclose the PRC barrel domain; that stretch reads HPDEYYWVDL…RIVVDWDPEF (74 aa).

This sequence belongs to the RimM family. Binds ribosomal protein uS19.

It localises to the cytoplasm. In terms of biological role, an accessory protein needed during the final step in the assembly of 30S ribosomal subunit, possibly for assembly of the head region. Essential for efficient processing of 16S rRNA. May be needed both before and after RbfA during the maturation of 16S rRNA. It has affinity for free ribosomal 30S subunits but not for 70S ribosomes. In Xylella fastidiosa (strain M23), this protein is Ribosome maturation factor RimM.